The sequence spans 443 residues: ATP-dependent protease ATPase subunit HslU (443 aa).

Residues Ile18, 60 to 65 (GVGKTE), Asp256, Glu321, and Arg393 contribute to the ATP site.

Belongs to the ClpX chaperone family. HslU subfamily. As to quaternary structure, a double ring-shaped homohexamer of HslV is capped on each side by a ring-shaped HslU homohexamer. The assembly of the HslU/HslV complex is dependent on binding of ATP.

It localises to the cytoplasm. In terms of biological role, ATPase subunit of a proteasome-like degradation complex; this subunit has chaperone activity. The binding of ATP and its subsequent hydrolysis by HslU are essential for unfolding of protein substrates subsequently hydrolyzed by HslV. HslU recognizes the N-terminal part of its protein substrates and unfolds these before they are guided to HslV for hydrolysis. The polypeptide is ATP-dependent protease ATPase subunit HslU (Escherichia fergusonii (strain ATCC 35469 / DSM 13698 / CCUG 18766 / IAM 14443 / JCM 21226 / LMG 7866 / NBRC 102419 / NCTC 12128 / CDC 0568-73)).